The sequence spans 1776 residues: TOG array regulator of axonemal microtubules protein 1 (1776 aa).

TOG regions lie at residues 94–311 (EEET…RRLE) and 351–595 (PQEL…MPSS). HEAT repeat units lie at residues 175–212 (AFSL…RSSG), 214–246 (VLRT…PEDL), 250–288 (LDLT…RLGQ), 344–383 (NLKF…KFNP), 389–426 (ASLV…RLGE), 430–465 (QFLG…MKEV), 466–503 (GPQR…YPSE), and 505–542 (FDLP…SMGS). Disordered stretches follow at residues 655–676 (KNKL…TSNS), 817–921 (ILPS…RGIN), 970–1000 (HSSL…DSPD), and 1062–1084 (TRLS…GFTR). Composition is skewed to polar residues over residues 826–836 (PRTSPKHTSPL), 845–855 (DNSISFSNSWP), and 871–892 (LANQ…TAVQ). Residues 988 to 1000 (SGSSSTSDVDSPD) are compositionally biased toward low complexity. The interval 1259–1481 (DIALTEALRL…YIKESVKNLR (223 aa)) is TOG 3. 2 HEAT repeats span residues 1297–1334 (TKLH…YLKK) and 1338–1375 (QELD…NVTP). The segment at 1493–1536 (ASAKGRRSHPGSVGNTRSSSVSRDAFSSSEREVTEVREVPRKSA) is disordered. A compositionally biased stretch (low complexity) spans 1509–1520 (RSSSVSRDAFSS). Residues 1521 to 1533 (SEREVTEVREVPR) show a composition bias toward basic and acidic residues. A TOG 4 region spans residues 1540–1776 (SLESAEYIKV…LLDVTVLSEL (237 aa)). 3 HEAT repeats span residues 1541–1578 (LESA…NNQE), 1582–1619 (GNIV…LLRD), and 1623–1661 (PIIN…HVDN).

The protein belongs to the Crescerin family. In terms of assembly, interacts with ARMC9. Interacts with CCDC66, CEP104 and CSPP1.

The protein localises to the cell projection. It is found in the cilium. It localises to the cytoplasm. The protein resides in the cytoskeleton. Its subcellular location is the cilium axoneme. Functionally, involved in ciliogenesis. It is required for appropriate acetylation and polyglutamylation of ciliary microtubules, and regulation of cilium length. Interacts with microtubules and promotes microtubule polymerization via its HEAT repeat domains, especially those in TOG region 2 and 4. The polypeptide is TOG array regulator of axonemal microtubules protein 1 (Togaram1) (Mus musculus (Mouse)).